A 362-amino-acid polypeptide reads, in one-letter code: MAGNSFGQLFRVTTFGESHGLALGAVVDGCPPGLEISEADLQGDLDRRKPGTSRYTTPRREPDEVKILSGVFEGKTTGTSIGLLIENTDQRSKDYSDIKDLFRPGHADYTYHQKYGQRDYRGGGRSSARETAMRVAAGAIAKKYLKQVHGIEITGFLSQLGPIKAEAFDAAQIEQNPFFFPDAGKLEALDQYMRDLKKEGNSIGAKVQVIASNVPVGLGEPVFDRLDADIAHAMMGINAVKGVEIGDGFAVVEQKGSEHRDEMTPAGFASNHAGGILGGISSGQDIVVSMALKPTSSITVPGKTITTEGEATEMITKGRHDPCVGIRAVPIAEAMLALVLMDHLLRHRAQNQGVLTHTPQLR.

Residues 39–59 (ADLQGDLDRRKPGTSRYTTPR) form a disordered region. NADP(+) contacts are provided by arginine 48 and arginine 54. FMN is bound by residues 125–127 (RSS), 238–239 (NA), glycine 278, 293–297 (KPTSS), and arginine 319.

This sequence belongs to the chorismate synthase family. In terms of assembly, homotetramer. The cofactor is FMNH2.

The catalysed reaction is 5-O-(1-carboxyvinyl)-3-phosphoshikimate = chorismate + phosphate. The protein operates within metabolic intermediate biosynthesis; chorismate biosynthesis; chorismate from D-erythrose 4-phosphate and phosphoenolpyruvate: step 7/7. Its function is as follows. Catalyzes the anti-1,4-elimination of the C-3 phosphate and the C-6 proR hydrogen from 5-enolpyruvylshikimate-3-phosphate (EPSP) to yield chorismate, which is the branch point compound that serves as the starting substrate for the three terminal pathways of aromatic amino acid biosynthesis. This reaction introduces a second double bond into the aromatic ring system. The polypeptide is Chorismate synthase (Aeromonas hydrophila subsp. hydrophila (strain ATCC 7966 / DSM 30187 / BCRC 13018 / CCUG 14551 / JCM 1027 / KCTC 2358 / NCIMB 9240 / NCTC 8049)).